Here is an 859-residue protein sequence, read N- to C-terminus: MEKEYSPKKIENYVQEFWKKNKTFEVKEDPKKEKYYCLPMLPYPSGKLHMGHVRNYTISDVISRYQRMLGKNVLQPMGWDAFGLPAEEAAIRNNTDPFSWTQKNIKYMKKQLQSLGFSYDWSREITTCHPEYYHWEQWFFTKLYEKKLVYKKNSLVNWCSYDKTVLANEQVIDGCCWRCQNKIRIKQIPQWFIKIRNYAESLYQDLKKLTHWPENVKNMQRNWIGRIKGFEITLNVFNTCQKLKVFTQRLDLLMGVTYISISSCHKLSINLSKKNELIKKFIKKYRYISQEEQYKVKYTGINTNLFVVHPITKKTIPIWISNATHIEYGTNAVLSIPGHNENDWNFAVKNNLKIKYVIFNPDHQEPKLYTSFLDIKGTLFNSQEFNGLNLKDGTEKIKKILYKKKILKEKINYKLQDWCISRQRYWGTPIPMAKFKNGKMIPIPENQLPVVLPKIRKNTNLLQQAINFNSKWAEIFIHGKHAIREIDTFDTFMESSWYYARYTCPNFNTGMIDSIASKYWLPVDQYIGGIEHAIMHLMYFRFYHKLLRDFKLVDFDEPVKNLLCQGMVLSEAFYKIDSNSQRKWFNSSSVLIKRNTKGEIIESHTQKGEKLIYAGMIKMSKSKNNGIEPELIIQRYGADTIRLFIMFSAPVESDLEWKESGLKGIYRFLKKLWMLIFNYIDIKNTHKKINFDFLNHQQSELRYQLHKTIAKVSDDIGRRQTFNTAISEIMKLVNQLSKAPIKEEQDKSIMRESLICIIKMLYPFTPHFCFFVWNYFNNHSSIDNEKWPIFQKDILSKKYSTIVAQINGKKRCATKISDSLTKEEIFLYIQNQPIIKKYLEDVDIKKIIYIPKKIINFVT.

Positions 42–52 (PYPSGKLHMGH) match the 'HIGH' region motif. The 'KMSKS' region motif lies at 618–622 (KMSKS). ATP is bound at residue lysine 621.

This sequence belongs to the class-I aminoacyl-tRNA synthetase family.

It is found in the cytoplasm. The catalysed reaction is tRNA(Leu) + L-leucine + ATP = L-leucyl-tRNA(Leu) + AMP + diphosphate. This chain is Leucine--tRNA ligase, found in Buchnera aphidicola subsp. Acyrthosiphon pisum (strain APS) (Acyrthosiphon pisum symbiotic bacterium).